The following is a 421-amino-acid chain: Subtilisin-like protease 2 (421 aa).

An N-terminal signal peptide occupies residues 1 to 16 (MQLLNFGLLLLPFVAG). Residues 17-122 (DLAPQPEPLL…VHPDQHVYLA (106 aa)) constitute a propeptide that is removed on maturation. The Inhibitor I9 domain occupies 36 to 122 (QYIVTLKEGL…VHPDQHVYLA (87 aa)). Residues 131–421 (RWGLGYMSSK…ERKFTLPKYF (291 aa)) enclose the Peptidase S8 domain. Catalysis depends on charge relay system residues aspartate 169 and histidine 201. Asparagine 248, asparagine 261, and asparagine 348 each carry an N-linked (GlcNAc...) asparagine glycan. Serine 357 (charge relay system) is an active-site residue. Asparagine 388 carries an N-linked (GlcNAc...) asparagine glycan.

It belongs to the peptidase S8 family.

The protein localises to the secreted. In terms of biological role, secreted subtilisin-like serine protease with keratinolytic activity that contributes to pathogenicity. This Trichophyton tonsurans (Scalp ringworm fungus) protein is Subtilisin-like protease 2 (SUB2).